The sequence spans 243 residues: Flavin-dependent thymidylate synthase (243 aa).

Residues 2–207 (VKVKLINYTP…ELKPIIEWAK (206 aa)) form the ThyX domain. Residues Ser56, 80–82 (RHR), and Gln88 each bind FAD. Residues 77–80 (QLVR), 88–92 (QQSQR), and Arg146 each bind dUMP. The ThyX motif signature appears at 80–90 (RHRIASYTQQS). FAD is bound by residues 162-164 (NLR) and His168. Position 173 (Arg173) interacts with dUMP. The active-site Involved in ionization of N3 of dUMP, leading to its activation is the Arg173.

It belongs to the thymidylate synthase ThyX family. In terms of assembly, homotetramer. It depends on FAD as a cofactor.

It catalyses the reaction dUMP + (6R)-5,10-methylene-5,6,7,8-tetrahydrofolate + NADPH + H(+) = dTMP + (6S)-5,6,7,8-tetrahydrofolate + NADP(+). It functions in the pathway pyrimidine metabolism; dTTP biosynthesis. Its function is as follows. Catalyzes the reductive methylation of 2'-deoxyuridine-5'-monophosphate (dUMP) to 2'-deoxythymidine-5'-monophosphate (dTMP) while utilizing 5,10-methylenetetrahydrofolate (mTHF) as the methyl donor, and NADPH and FADH(2) as the reductant. This is Flavin-dependent thymidylate synthase from Pyrococcus horikoshii (strain ATCC 700860 / DSM 12428 / JCM 9974 / NBRC 100139 / OT-3).